Here is a 341-residue protein sequence, read N- to C-terminus: tRNA N6-adenosine threonylcarbamoyltransferase (341 aa).

Positions 111 and 115 each coordinate Fe cation. Residues 134 to 138, Asp-167, Gly-180, and Asn-276 each bind substrate; that span reads LVSGG. Asp-304 contacts Fe cation.

This sequence belongs to the KAE1 / TsaD family. It depends on Fe(2+) as a cofactor.

Its subcellular location is the cytoplasm. It catalyses the reaction L-threonylcarbamoyladenylate + adenosine(37) in tRNA = N(6)-L-threonylcarbamoyladenosine(37) in tRNA + AMP + H(+). Functionally, required for the formation of a threonylcarbamoyl group on adenosine at position 37 (t(6)A37) in tRNAs that read codons beginning with adenine. Is involved in the transfer of the threonylcarbamoyl moiety of threonylcarbamoyl-AMP (TC-AMP) to the N6 group of A37, together with TsaE and TsaB. TsaD likely plays a direct catalytic role in this reaction. This chain is tRNA N6-adenosine threonylcarbamoyltransferase, found in Pseudomonas paraeruginosa (strain DSM 24068 / PA7) (Pseudomonas aeruginosa (strain PA7)).